A 215-amino-acid chain; its full sequence is Vesicle-trafficking protein SEC22b (215 aa).

Residues 1–194 (MVLLTMIARV…KYLNMRSTYA (194 aa)) are Cytoplasmic-facing. The Longin domain maps to 6–119 (MIARVADGLP…YSFIEFDTFI (114 aa)). K38 bears the N6-acetyllysine mark. A v-SNARE coiled-coil homology domain is found at 134–194 (NLGSINTELQ…KYLNMRSTYA (61 aa)). S137 is subject to Phosphoserine. Phosphothreonine is present on T140. Phosphoserine occurs at positions 164, 168, 174, and 177. A helical; Anchor for type IV membrane protein transmembrane segment spans residues 195–215 (KLAAVAVFFIMLIVYVRFWWL).

Belongs to the synaptobrevin family. In terms of assembly, interacts with STX17. Component of two distinct SNARE complexes consisting of STX5, GOSR2/BOS1, BET1 and SEC22B or STX18, USE1L, BNIP1/SEC20L and SEC22B. YKT6 can probably replace SEC22B as subunit of either complex. Interacts with the COPII Sec23/24 complex composed of SEC23A and SEC24A; recruits SEC22B into COPII-coated vesicles to allow its transport from the endoplasmic reticulum to the Golgi. Interacts with BET1.

The protein localises to the endoplasmic reticulum membrane. It is found in the endoplasmic reticulum-Golgi intermediate compartment membrane. The protein resides in the golgi apparatus. It localises to the cis-Golgi network membrane. Its subcellular location is the trans-Golgi network membrane. The protein localises to the melanosome. Its function is as follows. SNARE involved in targeting and fusion of ER-derived transport vesicles with the Golgi complex as well as Golgi-derived retrograde transport vesicles with the ER. The polypeptide is Vesicle-trafficking protein SEC22b (Sec22b) (Cricetulus griseus (Chinese hamster)).